Here is a 1639-residue protein sequence, read N- to C-terminus: RIMS-binding protein 3B (1639 aa).

3 disordered regions span residues 1-22, 215-240, and 295-364; these read MAKDSPSPLGASPKKPGCSSPA, GSPDPQAVHSLEEPLPQTSSGSCHAP, and SLDS…LTPS. Positions 21 to 143 form a coiled coil; sequence PAAAVLENQR…ELQRQLAEEL (123 aa). The span at 326–339 shows a compositional bias: pro residues; that stretch reads SPPPSPLPPPPPPS. Coiled-coil stretches lie at residues 409–442 and 480–619; these read QADEKVKRLKVKRAELTGLARRLADRARELQETN and LAKD…AEEN. Positions 697–811 are disordered; the sequence is CRPGHPPEQP…DRDTASEVDD (115 aa). Polar residues-rich tracts occupy residues 707-718 and 761-775; these read WETSQMPESQVK and SVPQVSETVPASQPL. A compositionally biased stretch (low complexity) spans 776–790; the sequence is SKKTSSQSNSSSEGS. The 68-residue stretch at 832–899 folds into the SH3 1 domain; the sequence is PKLKIFMAQY…PSNFVEQIPD (68 aa). Fibronectin type-III domains are found at residues 995 to 1083 and 1088 to 1184; these read APMQ…TLLA and PPLE…IPED. Disordered stretches follow at residues 1251 to 1273, 1292 to 1325, and 1392 to 1413; these read PRRQSPVSNLGSEGECPSSGAGS, QKSPQNHRPPSVSDQPGEKENCYQHMGTSKSPAP, and GTERREERREPEPHSRQGQALG. Over residues 1293–1305 the composition is skewed to polar residues; it reads KSPQNHRPPSVSD. Basic and acidic residues predominate over residues 1392–1406; that stretch reads GTERREERREPEPHS. 2 SH3 domains span residues 1452–1520 and 1569–1636; these read TPAR…EMEV and WTPK…HMSL.

The protein belongs to the RIMBP family. In terms of assembly, interacts with LRGUK (via guanylate kinase-like domain). Interacts (via C-terminus) with HOOK1 (via coiled-coil region).

The protein localises to the cytoplasm. It localises to the cytoskeleton. Functionally, probable component of the manchette, a microtubule-based structure which plays a key role in sperm head morphogenesis during late stages of sperm development. This Homo sapiens (Human) protein is RIMS-binding protein 3B (RIMBP3B).